Reading from the N-terminus, the 395-residue chain is Chorismate synthase (395 aa).

NADP(+)-binding residues include R40 and R46. A disordered region spans residues 99-120 (PREGRNAPLSRPRPGHADLTGM). FMN-binding positions include 134–136 (RSS), 256–257 (QA), G301, 316–320 (KPIPS), and R342.

It belongs to the chorismate synthase family. Homotetramer. It depends on FMNH2 as a cofactor.

The catalysed reaction is 5-O-(1-carboxyvinyl)-3-phosphoshikimate = chorismate + phosphate. The protein operates within metabolic intermediate biosynthesis; chorismate biosynthesis; chorismate from D-erythrose 4-phosphate and phosphoenolpyruvate: step 7/7. Functionally, catalyzes the anti-1,4-elimination of the C-3 phosphate and the C-6 proR hydrogen from 5-enolpyruvylshikimate-3-phosphate (EPSP) to yield chorismate, which is the branch point compound that serves as the starting substrate for the three terminal pathways of aromatic amino acid biosynthesis. This reaction introduces a second double bond into the aromatic ring system. In Bifidobacterium longum (strain DJO10A), this protein is Chorismate synthase.